The chain runs to 101 residues: opdI (101 aa).

Residues 30 to 49 (GGMGGALKIVFLGMMTYFIA) traverse the membrane as a helical segment. A disordered region spans residues 56–101 (SQHPPTDFNAPVQSVPQRAQRPSDTRLQGPVLLASNHPSGDSASPE). Composition is skewed to polar residues over residues 66–81 (PVQSVPQRAQRPSDTR) and 91–101 (NHPSGDSASPE).

The protein localises to the membrane. Its function is as follows. Part of the gene cluster that mediates the biosynthesis of oxopyrrolidines, polyketide-amino acid hybrid compounds with feature structures of tetramic acid. Does not seem to play a role in oxopyrrolidines A and B biosynthesis. In Penicillium oxalicum (strain 114-2 / CGMCC 5302) (Penicillium decumbens), this protein is opdI.